Here is a 217-residue protein sequence, read N- to C-terminus: Ribonuclease T (217 aa).

Residues 20–195 (VVVDVETAGF…YDTEKTAELF (176 aa)) enclose the Exonuclease domain. Mg(2+) is bound by residues Asp-23, Glu-25, His-182, and Asp-187. Catalysis depends on His-182, which acts as the Proton donor/acceptor.

This sequence belongs to the RNase T family. In terms of assembly, homodimer. Requires Mg(2+) as cofactor.

Trims short 3' overhangs of a variety of RNA species, leaving a one or two nucleotide 3' overhang. Responsible for the end-turnover of tRNA: specifically removes the terminal AMP residue from uncharged tRNA (tRNA-C-C-A). Also appears to be involved in tRNA biosynthesis. The polypeptide is Ribonuclease T (Vibrio vulnificus (strain YJ016)).